The following is a 201-amino-acid chain: Small ribosomal subunit protein uS4c (201 aa).

Residues 89–150 (MRLDNIVFRL…RQKSQAIITK (62 aa)) enclose the S4 RNA-binding domain.

Belongs to the universal ribosomal protein uS4 family. Part of the 30S ribosomal subunit. Contacts protein S5. The interaction surface between S4 and S5 is involved in control of translational fidelity.

It is found in the plastid. The protein resides in the chloroplast. Functionally, one of the primary rRNA binding proteins, it binds directly to 16S rRNA where it nucleates assembly of the body of the 30S subunit. With S5 and S12 plays an important role in translational accuracy. The sequence is that of Small ribosomal subunit protein uS4c (rps4) from Physcomitrium patens (Spreading-leaved earth moss).